The following is a 376-amino-acid chain: UDP-N-acetylglucosamine--N-acetylmuramyl-(pentapeptide) pyrophosphoryl-undecaprenol N-acetylglucosamine transferase (376 aa).

Residues 11 to 13 (TGG), N117, R160, S208, and Q310 contribute to the UDP-N-acetyl-alpha-D-glucosamine site.

It belongs to the glycosyltransferase 28 family. MurG subfamily.

It localises to the cell inner membrane. It catalyses the reaction di-trans,octa-cis-undecaprenyl diphospho-N-acetyl-alpha-D-muramoyl-L-alanyl-D-glutamyl-meso-2,6-diaminopimeloyl-D-alanyl-D-alanine + UDP-N-acetyl-alpha-D-glucosamine = di-trans,octa-cis-undecaprenyl diphospho-[N-acetyl-alpha-D-glucosaminyl-(1-&gt;4)]-N-acetyl-alpha-D-muramoyl-L-alanyl-D-glutamyl-meso-2,6-diaminopimeloyl-D-alanyl-D-alanine + UDP + H(+). Its pathway is cell wall biogenesis; peptidoglycan biosynthesis. Functionally, cell wall formation. Catalyzes the transfer of a GlcNAc subunit on undecaprenyl-pyrophosphoryl-MurNAc-pentapeptide (lipid intermediate I) to form undecaprenyl-pyrophosphoryl-MurNAc-(pentapeptide)GlcNAc (lipid intermediate II). The polypeptide is UDP-N-acetylglucosamine--N-acetylmuramyl-(pentapeptide) pyrophosphoryl-undecaprenol N-acetylglucosamine transferase (Rickettsia massiliae (strain Mtu5)).